The chain runs to 429 residues: Ribosomal RNA small subunit methyltransferase B (429 aa).

S-adenosyl-L-methionine is bound by residues 254–260, Asp-277, Asp-303, and Asp-322; that span reads CAAPGGK. The active-site Nucleophile is the Cys-375.

This sequence belongs to the class I-like SAM-binding methyltransferase superfamily. RsmB/NOP family.

Its subcellular location is the cytoplasm. The enzyme catalyses cytidine(967) in 16S rRNA + S-adenosyl-L-methionine = 5-methylcytidine(967) in 16S rRNA + S-adenosyl-L-homocysteine + H(+). Specifically methylates the cytosine at position 967 (m5C967) of 16S rRNA. This chain is Ribosomal RNA small subunit methyltransferase B, found in Shigella boydii serotype 18 (strain CDC 3083-94 / BS512).